Reading from the N-terminus, the 195-residue chain is MGEIKLIVGLANPGAEYAQTRHNAGAWYVEELARICGVSLVPDSKYFGLTARAVLHGKDVRLLIPTTYMNLSGKAVGALANFFRITPEEILVAHDELDMPPGVAKFKLGGGHGGHNGLKDIIAKLANDKNFYRLRIGIGHPGDKNKVSGYVLGKAPAKEQELINAAVDEAVRSTEVLFKEDMVKAMTRLHSFKAE.

Tyrosine 17 is a tRNA binding site. Histidine 22 (proton acceptor) is an active-site residue. TRNA contacts are provided by tyrosine 68, asparagine 70, and asparagine 116.

This sequence belongs to the PTH family. Monomer.

Its subcellular location is the cytoplasm. It carries out the reaction an N-acyl-L-alpha-aminoacyl-tRNA + H2O = an N-acyl-L-amino acid + a tRNA + H(+). Functionally, hydrolyzes ribosome-free peptidyl-tRNAs (with 1 or more amino acids incorporated), which drop off the ribosome during protein synthesis, or as a result of ribosome stalling. In terms of biological role, catalyzes the release of premature peptidyl moieties from peptidyl-tRNA molecules trapped in stalled 50S ribosomal subunits, and thus maintains levels of free tRNAs and 50S ribosomes. The chain is Peptidyl-tRNA hydrolase from Shewanella sp. (strain ANA-3).